Consider the following 250-residue polypeptide: IEITANILKFQDADGKHLLPKIRDSAGQKGTGKWTAISALEYGVPVTLIGEAVFARCLSSLKDERVQASKKLKGPQKIQFSGDKKSFLEDIRKALYASKIISYTQGFMLLRQAAAEFGWSSTTEHRLMWRGGCIIRSVFLGKIKDAFDRNPGLQNLLLDDFFKSAVEDCQDSWRRAVSTGVQTGIPMPCFTTALSFYDGYRHEMLPANLIQAQRDYFGAHTYELLAKPGHFVHTNWTGHGGSVSSSSYNA.

Residues Lys29 and Arg56 each coordinate substrate. Residue Lys77 is modified to N6-acetyllysine. Arg214 and His220 together coordinate substrate. 245–248 serves as a coordination point for NADP(+); it reads SSSY.

Belongs to the 6-phosphogluconate dehydrogenase family. In terms of assembly, homodimer.

The protein resides in the cytoplasm. It carries out the reaction 6-phospho-D-gluconate + NADP(+) = D-ribulose 5-phosphate + CO2 + NADPH. The protein operates within carbohydrate degradation; pentose phosphate pathway; D-ribulose 5-phosphate from D-glucose 6-phosphate (oxidative stage): step 3/3. In terms of biological role, catalyzes the oxidative decarboxylation of 6-phosphogluconate to ribulose 5-phosphate and CO(2), with concomitant reduction of NADP to NADPH. This is 6-phosphogluconate dehydrogenase, decarboxylating (PGD) from Sus scrofa (Pig).